Reading from the N-terminus, the 432-residue chain is Serine/threonine-protein phosphatase 2A activator 1 (432 aa).

It belongs to the PTPA-type PPIase family.

The protein resides in the cytoplasm. It localises to the nucleus. The catalysed reaction is [protein]-peptidylproline (omega=180) = [protein]-peptidylproline (omega=0). Its function is as follows. PPIases accelerate the folding of proteins. It catalyzes the cis-trans isomerization of proline imidic peptide bonds in oligopeptides. Acts as a regulatory subunit for PP2A-like phosphatases modulating their activity or substrate specificity, probably by inducing a conformational change in the catalytic subunit, a direct target of the PPIase. Can reactivate inactive phosphatase PP2A-phosphatase methylesterase complexes (PP2Ai) in presence of ATP and Mg(2+) by dissociating the inactive form from the complex. The sequence is that of Serine/threonine-protein phosphatase 2A activator 1 (rrd1) from Emericella nidulans (strain FGSC A4 / ATCC 38163 / CBS 112.46 / NRRL 194 / M139) (Aspergillus nidulans).